A 546-amino-acid chain; its full sequence is Chaperonin GroEL 2 (546 aa).

ATP is bound by residues 30–33 (TLGP), lysine 51, 87–91 (DGTTT), glycine 415, 479–481 (NAA), and aspartate 495. The disordered stretch occupies residues 524-546 (APKDAPPAAPAGVPGAGGPGFDF). Over residues 537–546 (PGAGGPGFDF) the composition is skewed to gly residues.

Belongs to the chaperonin (HSP60) family. Forms a cylinder of 14 subunits composed of two heptameric rings stacked back-to-back. Interacts with the co-chaperonin GroES.

The protein localises to the cytoplasm. The enzyme catalyses ATP + H2O + a folded polypeptide = ADP + phosphate + an unfolded polypeptide.. In terms of biological role, together with its co-chaperonin GroES, plays an essential role in assisting protein folding. The GroEL-GroES system forms a nano-cage that allows encapsulation of the non-native substrate proteins and provides a physical environment optimized to promote and accelerate protein folding. This chain is Chaperonin GroEL 2, found in Burkholderia pseudomallei (strain 1710b).